Consider the following 286-residue polypeptide: 2-hydroxy-6-oxo-6-phenylhexa-2,4-dienoate hydrolase (286 aa).

Substrate is bound by residues 42 to 43 (GG), Asn51, Asn111, Thr180, and Arg190. The active-site Proton acceptor is the His265. Residue Trp266 coordinates substrate.

This sequence belongs to the AB hydrolase superfamily. BphD family. Homodimer.

The catalysed reaction is 2,6-dioxo-6-phenylhexa-3-enoate + H2O = 2-oxopent-4-enoate + benzoate + H(+). It functions in the pathway xenobiotic degradation; biphenyl degradation; 2-hydroxy-2,4-pentadienoate and benzoate from biphenyl: step 4/4. Its function is as follows. Catalyzes an unusual C-C bond hydrolysis of 2-hydroxy-6-oxo-6-phenylhexa-2,4-dienoic acid (HOPDA) to produce benzoic acid and 2-hydroxy-2,4-pentadienoic acid (HPD). This is 2-hydroxy-6-oxo-6-phenylhexa-2,4-dienoate hydrolase from Comamonas testosteroni (Pseudomonas testosteroni).